We begin with the raw amino-acid sequence, 71 residues long: Large ribosomal subunit protein bL31 (71 aa).

Zn(2+)-binding residues include Cys-16, Cys-18, Cys-37, and Cys-40.

This sequence belongs to the bacterial ribosomal protein bL31 family. Type A subfamily. Part of the 50S ribosomal subunit. It depends on Zn(2+) as a cofactor.

Functionally, binds the 23S rRNA. This Aeromonas salmonicida (strain A449) protein is Large ribosomal subunit protein bL31.